The chain runs to 204 residues: Methylthioribulose-1-phosphate dehydratase (204 aa).

Residues histidine 94 and histidine 96 each contribute to the Zn(2+) site.

The protein belongs to the aldolase class II family. MtnB subfamily. Requires Zn(2+) as cofactor.

The catalysed reaction is 5-(methylsulfanyl)-D-ribulose 1-phosphate = 5-methylsulfanyl-2,3-dioxopentyl phosphate + H2O. Its pathway is amino-acid biosynthesis; L-methionine biosynthesis via salvage pathway; L-methionine from S-methyl-5-thio-alpha-D-ribose 1-phosphate: step 2/6. Its function is as follows. Catalyzes the dehydration of methylthioribulose-1-phosphate (MTRu-1-P) into 2,3-diketo-5-methylthiopentyl-1-phosphate (DK-MTP-1-P). This is Methylthioribulose-1-phosphate dehydratase from Citrobacter koseri (strain ATCC BAA-895 / CDC 4225-83 / SGSC4696).